The primary structure comprises 156 residues: dCTP deaminase (156 aa).

DCTP is bound by residues 79-84 (RSSLAR), D95, Q124, and Y138.

This sequence belongs to the dCTP deaminase family. As to quaternary structure, homotrimer.

It catalyses the reaction dCTP + H2O + H(+) = dUTP + NH4(+). The protein operates within pyrimidine metabolism; dUMP biosynthesis; dUMP from dCTP (dUTP route): step 1/2. In terms of biological role, catalyzes the deamination of dCTP to dUTP. This Pyrococcus horikoshii (strain ATCC 700860 / DSM 12428 / JCM 9974 / NBRC 100139 / OT-3) protein is dCTP deaminase.